Reading from the N-terminus, the 397-residue chain is Phosphoglycerate kinase (397 aa).

Substrate is bound by residues 21 to 23 (DFN), R37, 60 to 63 (HLGR), R119, and R152. ATP contacts are provided by residues K203, G294, E325, and 354–357 (GGDS).

It belongs to the phosphoglycerate kinase family. Monomer.

Its subcellular location is the cytoplasm. The catalysed reaction is (2R)-3-phosphoglycerate + ATP = (2R)-3-phospho-glyceroyl phosphate + ADP. The protein operates within carbohydrate degradation; glycolysis; pyruvate from D-glyceraldehyde 3-phosphate: step 2/5. This is Phosphoglycerate kinase from Chlorobium chlorochromatii (strain CaD3).